The sequence spans 287 residues: Ribosomal RNA small subunit methyltransferase A (287 aa).

N28, L30, G55, E77, D103, and N123 together coordinate S-adenosyl-L-methionine.

It belongs to the class I-like SAM-binding methyltransferase superfamily. rRNA adenine N(6)-methyltransferase family. RsmA subfamily.

The protein localises to the cytoplasm. It carries out the reaction adenosine(1518)/adenosine(1519) in 16S rRNA + 4 S-adenosyl-L-methionine = N(6)-dimethyladenosine(1518)/N(6)-dimethyladenosine(1519) in 16S rRNA + 4 S-adenosyl-L-homocysteine + 4 H(+). In terms of biological role, specifically dimethylates two adjacent adenosines (A1518 and A1519) in the loop of a conserved hairpin near the 3'-end of 16S rRNA in the 30S particle. May play a critical role in biogenesis of 30S subunits. The sequence is that of Ribosomal RNA small subunit methyltransferase A from Rhodopseudomonas palustris (strain BisA53).